The following is a 172-amino-acid chain: 6,7-dimethyl-8-ribityllumazine synthase (172 aa).

5-amino-6-(D-ribitylamino)uracil-binding positions include Phe22 and Ala56–Glu58. Leu78–Gly79 is a binding site for (2S)-2-hydroxy-3-oxobutyl phosphate. Residue Ala80–Ile82 participates in 5-amino-6-(D-ribitylamino)uracil binding. Catalysis depends on His88, which acts as the Proton donor. Position 113 (Phe113) interacts with 5-amino-6-(D-ribitylamino)uracil. Residue Arg127 coordinates (2S)-2-hydroxy-3-oxobutyl phosphate.

Belongs to the DMRL synthase family.

It catalyses the reaction (2S)-2-hydroxy-3-oxobutyl phosphate + 5-amino-6-(D-ribitylamino)uracil = 6,7-dimethyl-8-(1-D-ribityl)lumazine + phosphate + 2 H2O + H(+). It participates in cofactor biosynthesis; riboflavin biosynthesis; riboflavin from 2-hydroxy-3-oxobutyl phosphate and 5-amino-6-(D-ribitylamino)uracil: step 1/2. Its function is as follows. Catalyzes the formation of 6,7-dimethyl-8-ribityllumazine by condensation of 5-amino-6-(D-ribitylamino)uracil with 3,4-dihydroxy-2-butanone 4-phosphate. This is the penultimate step in the biosynthesis of riboflavin. This chain is 6,7-dimethyl-8-ribityllumazine synthase, found in Protochlamydia amoebophila (strain UWE25).